A 1340-amino-acid chain; its full sequence is Early transcription factor large subunit homolog (1340 aa).

It belongs to the asfivirus G1340L family.

The protein resides in the virion. Functionally, putative initation factor. In African swine fever virus (isolate Tick/South Africa/Pretoriuskop Pr4/1996) (ASFV), this protein is Early transcription factor large subunit homolog.